The primary structure comprises 341 residues: Ectoine-binding periplasmic protein TeaA (341 aa).

Residues 1 to 25 (MKAYKLLTTASIGALMLGMSTAAYS) form the signal peptide. The L-ectoine site is built by Glu34, Arg169, Asn209, Trp213, and Phe234.

It belongs to the bacterial solute-binding protein 7 family. Monomer. The complex comprises the extracytoplasmic solute receptor protein TeaA, and the two transmembrane proteins TeaB and TeaC.

It is found in the periplasm. In terms of biological role, part of the tripartite ATP-independent periplasmic (TRAP) transport system TeaABC involved in the uptake of ectoine and hydroxyectoine in response to osmotic upshock. Probably functions as a recovery system for synthesized ectoine that leaks out of the cell. Binds ectoine with high affinity. Affinity for hydroxyectoine is approximately 20-fold lower. In Halomonas elongata (strain ATCC 33173 / DSM 2581 / NBRC 15536 / NCIMB 2198 / 1H9), this protein is Ectoine-binding periplasmic protein TeaA (teaA).